Consider the following 456-residue polypeptide: Smoothelin-like protein 2 (456 aa).

A coiled-coil region spans residues 24–88; sequence LEGAVRALHE…RQVEALGLAT (65 aa). Phosphothreonine is present on Thr-96. 3 positions are modified to phosphoserine: Ser-98, Ser-126, and Ser-131. A compositionally biased stretch (polar residues) spans 120–129; sequence HATFSLSGRS. 3 disordered regions span residues 120–140, 154–190, and 220–310; these read HATF…ASDL, GHQL…RMPH, and VGGF…GAQA. Over residues 131 to 140 the composition is skewed to basic and acidic residues; sequence SVEHDEASDL. Polar residues predominate over residues 163–174; it reads NGSSEVQTSSAQ. The segment covering 242 to 251 has biased composition (low complexity); sequence SSSFTRSLSG. 3 positions are modified to phosphoserine: Ser-250, Ser-252, and Ser-265. Residues 268 to 279 show a composition bias toward pro residues; sequence LVTPPQSPPSSQ. Thr-270 carries the post-translational modification Phosphothreonine. Ser-274 is modified (phosphoserine). The segment covering 298 to 308 has biased composition (polar residues); it reads RSQTLPRTSGA. Ser-339 carries the post-translational modification Phosphoserine. The region spanning 346 to 453 is the Calponin-homology (CH) domain; it reads SSIKQILLEW…YVQSLYNHLR (108 aa).

The protein belongs to the smoothelin family.

The sequence is that of Smoothelin-like protein 2 (Smtnl2) from Mus musculus (Mouse).